The primary structure comprises 859 residues: Probable helicase A859L (859 aa).

In terms of domain architecture, Helicase ATP-binding spans 178-349 (YQELQRSGRA…KNRELFGGVA (172 aa)). ATP is bound at residue 191–198 (MACRCGKT). The short motif at 298–301 (DECH) is the DEAH box element. A Helicase C-terminal domain is found at 394–553 (QIIMALAYLK…RFYEHLLNPS (160 aa)).

It belongs to the asfivirus helicase A859L family.

The chain is Probable helicase A859L from African swine fever virus (isolate Pig/Kenya/KEN-50/1950) (ASFV).